The sequence spans 326 residues: Glycerol-3-phosphate dehydrogenase [NAD(P)+] (326 aa).

Residues Trp-13, Arg-33, and Lys-107 each coordinate NADPH. Positions 107, 135, and 137 each coordinate sn-glycerol 3-phosphate. Ala-139 provides a ligand contact to NADPH. Residues Lys-190, Asp-243, Ser-253, Arg-254, and Asn-255 each contribute to the sn-glycerol 3-phosphate site. Lys-190 (proton acceptor) is an active-site residue. Position 254 (Arg-254) interacts with NADPH. Positions 273 and 275 each coordinate NADPH.

Belongs to the NAD-dependent glycerol-3-phosphate dehydrogenase family.

The protein resides in the cytoplasm. It catalyses the reaction sn-glycerol 3-phosphate + NAD(+) = dihydroxyacetone phosphate + NADH + H(+). The enzyme catalyses sn-glycerol 3-phosphate + NADP(+) = dihydroxyacetone phosphate + NADPH + H(+). The protein operates within membrane lipid metabolism; glycerophospholipid metabolism. Catalyzes the reduction of the glycolytic intermediate dihydroxyacetone phosphate (DHAP) to sn-glycerol 3-phosphate (G3P), the key precursor for phospholipid synthesis. This is Glycerol-3-phosphate dehydrogenase [NAD(P)+] from Brucella abortus (strain 2308).